A 445-amino-acid polypeptide reads, in one-letter code: Phosphoglucosamine mutase (445 aa).

Residue Ser103 is the Phosphoserine intermediate of the active site. Mg(2+)-binding residues include Ser103, Asp240, Asp242, and Asp244. Phosphoserine is present on Ser103.

It belongs to the phosphohexose mutase family. The cofactor is Mg(2+). In terms of processing, activated by phosphorylation.

The catalysed reaction is alpha-D-glucosamine 1-phosphate = D-glucosamine 6-phosphate. Catalyzes the conversion of glucosamine-6-phosphate to glucosamine-1-phosphate. The chain is Phosphoglucosamine mutase from Cellvibrio japonicus (strain Ueda107) (Pseudomonas fluorescens subsp. cellulosa).